The sequence spans 434 residues: ATP-dependent protease ATPase subunit HslU (434 aa).

ATP-binding positions include I18, G60–E65, D247, E312, and R384.

This sequence belongs to the ClpX chaperone family. HslU subfamily. A double ring-shaped homohexamer of HslV is capped on each side by a ring-shaped HslU homohexamer. The assembly of the HslU/HslV complex is dependent on binding of ATP.

The protein localises to the cytoplasm. Its function is as follows. ATPase subunit of a proteasome-like degradation complex; this subunit has chaperone activity. The binding of ATP and its subsequent hydrolysis by HslU are essential for unfolding of protein substrates subsequently hydrolyzed by HslV. HslU recognizes the N-terminal part of its protein substrates and unfolds these before they are guided to HslV for hydrolysis. The chain is ATP-dependent protease ATPase subunit HslU from Brucella melitensis biotype 2 (strain ATCC 23457).